The primary structure comprises 436 residues: Indole-3-acetyl-aspartic acid hydrolase (436 aa).

The protein belongs to the peptidase M20 family. In terms of assembly, monomer.

The catalysed reaction is (indol-3-yl)acetyl-L-aspartate + H2O = (indol-3-yl)acetate + L-aspartate. Its function is as follows. Hydrolyzes indole-3-acetyl-aspartate (IAA-Asp) to indole-3-acetic acid (IAA). Shows an exclusively high substrate specificity for IAA-Asp. This Enterobacter agglomerans (Erwinia herbicola) protein is Indole-3-acetyl-aspartic acid hydrolase.